A 700-amino-acid polypeptide reads, in one-letter code: Phenoloxidase 8 (700 aa).

Positions 1 to 51 (MATLTQKFHGLLQHPLEPLFLPKNDGTLFYDLPERFLTSRYSPIGQNLANR) are excised as a propeptide. N-linked (GlcNAc...) asparagine glycosylation is found at Asn64 and Asn198. The Cu cation site is built by His223, His227, and His252. Asn295 carries an N-linked (GlcNAc...) asparagine glycan. The active-site Proton acceptor is Glu364. His379, His383, and His419 together coordinate Cu cation. 3 N-linked (GlcNAc...) asparagine glycosylation sites follow: Asn445, Asn507, and Asn565. Intrachain disulfides connect Cys592/Cys636 and Cys594/Cys643.

Belongs to the tyrosinase family. As to quaternary structure, homodimer. Cu(2+) serves as cofactor. Upon activation, a trypsin type protease cleaves prophenol oxidase to yield the active enzyme.

It is found in the secreted. The catalysed reaction is 2 tyramine + O2 = 2 dopamine. It catalyses the reaction 2 dopamine + O2 = 2 dopamine quinone + 2 H2O. In terms of biological role, this is a copper-containing oxidase that functions in the formation of pigments such as melanins and other polyphenolic compounds. Catalyzes the oxidation of o-diphenols such as dopamine. Also oxidizes monophenols such as tyramine. The polypeptide is Phenoloxidase 8 (Anopheles gambiae (African malaria mosquito)).